Consider the following 122-residue polypeptide: Large ribosomal subunit protein uL14c (122 aa).

The protein belongs to the universal ribosomal protein uL14 family. In terms of assembly, part of the 50S ribosomal subunit.

Its subcellular location is the plastid. It is found in the chloroplast. Functionally, binds to 23S rRNA. The sequence is that of Large ribosomal subunit protein uL14c from Lepidium virginicum (Virginia pepperweed).